Reading from the N-terminus, the 497-residue chain is MAKYIMAFDQGTTSSRAIIFDRSGKIIASLNQEFKQIYPKAGWVEHDPMEIWGTQIGVAKGVIEKAGINPEDIAAIGITNQRETTVVWDKNTGKPIYNAIVWQCRRTAPICDELKNKGFDKKIREKTGLVVDAYFSGTKIKWILDNVEGAREKAEKGELLFGNIDTWLIWNLTRGKVHVTDYSNASRTMIFNIHELKWDKEILAELNIPEQMLPEVKPSSYVYGYTDKSIFGVEIPIAGDAGDQQAALFGQACFKPGMAKNTYGTGCFMLMNTGEKAVPSNTGLLTTIAWGIDGKVEYALEGSIFIAGAAIQWLRDELRIIDNSPQSEEYAMKVEDTNGVYVVPAFVGLGAPYWDMYARGTIVGLTRGAKREHIIRATLESIAYQTRDVLEAMQEDSGIRLQALKVDGGASANNFLMQFQSDILGVPVDRPQVIETTALGASYLAGLAVGFWNSREEIEKNWNVDKHFEPAMDNEKREKLYKGWKKAVERAMKWAEE.

ADP is bound at residue T12. Residues T12, T13, and S14 each contribute to the ATP site. T12 lines the sn-glycerol 3-phosphate pocket. An ADP-binding site is contributed by R16. R82, E83, Y134, and D243 together coordinate sn-glycerol 3-phosphate. 5 residues coordinate glycerol: R82, E83, Y134, D243, and Q244. ADP is bound by residues T265 and G308. T265, G308, Q312, and G409 together coordinate ATP. ADP is bound by residues G409 and N413.

This sequence belongs to the FGGY kinase family. As to quaternary structure, homotetramer and homodimer (in equilibrium).

The enzyme catalyses glycerol + ATP = sn-glycerol 3-phosphate + ADP + H(+). It participates in polyol metabolism; glycerol degradation via glycerol kinase pathway; sn-glycerol 3-phosphate from glycerol: step 1/1. Activated by phosphorylation and inhibited by fructose 1,6-bisphosphate (FBP). Key enzyme in the regulation of glycerol uptake and metabolism. Catalyzes the phosphorylation of glycerol to yield sn-glycerol 3-phosphate. The sequence is that of Glycerol kinase from Thermoanaerobacter pseudethanolicus (strain ATCC 33223 / 39E) (Clostridium thermohydrosulfuricum).